Consider the following 309-residue polypeptide: Porphobilinogen deaminase (309 aa).

Cys-242 carries the post-translational modification S-(dipyrrolylmethanemethyl)cysteine.

It belongs to the HMBS family. Monomer. Dipyrromethane serves as cofactor.

It carries out the reaction 4 porphobilinogen + H2O = hydroxymethylbilane + 4 NH4(+). It participates in porphyrin-containing compound metabolism; protoporphyrin-IX biosynthesis; coproporphyrinogen-III from 5-aminolevulinate: step 2/4. Its function is as follows. Tetrapolymerization of the monopyrrole PBG into the hydroxymethylbilane pre-uroporphyrinogen in several discrete steps. The protein is Porphobilinogen deaminase of Actinobacillus succinogenes (strain ATCC 55618 / DSM 22257 / CCUG 43843 / 130Z).